The sequence spans 158 residues: Transcription elongation factor GreA (158 aa).

Residues 47–74 (AEYHAAKEEQSHNEGRIAELEDKLARAD) are a coiled coil.

The protein belongs to the GreA/GreB family.

Functionally, necessary for efficient RNA polymerase transcription elongation past template-encoded arresting sites. The arresting sites in DNA have the property of trapping a certain fraction of elongating RNA polymerases that pass through, resulting in locked ternary complexes. Cleavage of the nascent transcript by cleavage factors such as GreA or GreB allows the resumption of elongation from the new 3'terminus. GreA releases sequences of 2 to 3 nucleotides. This chain is Transcription elongation factor GreA, found in Bradyrhizobium sp. (strain BTAi1 / ATCC BAA-1182).